The primary structure comprises 450 residues: Alpha-2B adrenergic receptor (450 aa).

Over Met1–Thr12 the chain is Extracellular. The chain crosses the membrane as a helical span at residues Ala13 to Leu38. Topologically, residues Thr39–Asn48 are cytoplasmic. A helical membrane pass occupies residues Leu49–Ser69. At Leu70 to Glu86 the chain is on the extracellular side. Cys85 and Cys164 are oxidised to a cystine. The chain crosses the membrane as a helical span at residues Val87–Ser107. Residues Leu108–Arg128 are Cytoplasmic-facing. Residues Ile129–Ile149 form a helical membrane-spanning segment. The Extracellular portion of the chain corresponds to Tyr150–Tyr172. Residues Ile173–Leu193 traverse the membrane as a helical segment. Residues Arg194–Arg368 are Cytoplasmic-facing. Disordered stretches follow at residues Arg204 to Leu229 and Ala241 to Gln329. Residues Val246–Lys256 are compositionally biased toward basic and acidic residues. Residues Pro293 to Glu311 show a composition bias toward acidic residues. Low complexity predominate over residues Pro312–Pro326. The helical transmembrane segment at Phe369–Phe389 threads the bilayer. Topologically, residues Ser390–His405 are extracellular. A helical membrane pass occupies residues Gly406–Tyr426. Topologically, residues Thr427–Trp450 are cytoplasmic. Residue Cys442 is the site of S-palmitoyl cysteine attachment.

Belongs to the G-protein coupled receptor 1 family. Adrenergic receptor subfamily. ADRA2B sub-subfamily. Interacts with RAB26. Interacts with PPP1R9B. Interacts with GGA1, GGA2 and GGA3.

It localises to the cell membrane. Functionally, alpha-2 adrenergic receptors mediate the catecholamine-induced inhibition of adenylate cyclase through the action of G proteins. The rank order of potency for agonists of this receptor is clonidine &gt; norepinephrine &gt; epinephrine = oxymetazoline &gt; dopamine &gt; p-tyramine = phenylephrine &gt; serotonin &gt; p-synephrine / p-octopamine. For antagonists, the rank order is yohimbine &gt; chlorpromazine &gt; phentolamine &gt; mianserine &gt; spiperone &gt; prazosin &gt; alprenolol &gt; propanolol &gt; pindolol. This Homo sapiens (Human) protein is Alpha-2B adrenergic receptor (ADRA2B).